Here is a 557-residue protein sequence, read N- to C-terminus: Large cysteine-rich periplasmic protein omcB (557 aa).

The first 22 residues, 1 to 22, serve as a signal peptide directing secretion; the sequence is MSKLIRRVVTVLALTSMASSFA. Positions 23-40 are excised as a propeptide; it reads SGKIEAAAAESLATRFIA.

Part of a disulfide cross-linked outer membrane complex (COMC) composed of the major outer membrane porin (MOMP), the small cysteine-rich protein (omcA) and the large cysteine-rich periplasmic protein (omcB).

It is found in the periplasm. Functionally, in elementary bodies (EBs, the infectious stage, which is able to survive outside the host cell) provides the structural integrity of the outer envelope through disulfide cross-links with the small cysteine-rich protein and the major outer membrane porin. It has been described in publications as the Sarkosyl-insoluble COMC (Chlamydia outer membrane complex), and serves as the functional equivalent of peptidoglycan. In Chlamydophila psittaci (strain ATCC VR-125 / 6BC) (Chlamydia psittaci), this protein is Large cysteine-rich periplasmic protein omcB (omcB).